A 408-amino-acid polypeptide reads, in one-letter code: Imidazolonepropionase (408 aa).

Fe(3+) is bound by residues His-73 and His-75. Zn(2+) is bound by residues His-73 and His-75. Positions 82, 145, and 178 each coordinate 4-imidazolone-5-propanoate. Residue Tyr-145 participates in N-formimidoyl-L-glutamate binding. His-243 contacts Fe(3+). Zn(2+) is bound at residue His-243. Position 246 (Gln-246) interacts with 4-imidazolone-5-propanoate. Asp-318 serves as a coordination point for Fe(3+). Asp-318 is a Zn(2+) binding site. Positions 320 and 322 each coordinate N-formimidoyl-L-glutamate. Position 323 (Ser-323) interacts with 4-imidazolone-5-propanoate.

It belongs to the metallo-dependent hydrolases superfamily. HutI family. Requires Zn(2+) as cofactor. Fe(3+) is required as a cofactor.

It is found in the cytoplasm. The enzyme catalyses 4-imidazolone-5-propanoate + H2O = N-formimidoyl-L-glutamate. The protein operates within amino-acid degradation; L-histidine degradation into L-glutamate; N-formimidoyl-L-glutamate from L-histidine: step 3/3. Its function is as follows. Catalyzes the hydrolytic cleavage of the carbon-nitrogen bond in imidazolone-5-propanoate to yield N-formimidoyl-L-glutamate. It is the third step in the universal histidine degradation pathway. This Shewanella baltica (strain OS185) protein is Imidazolonepropionase.